We begin with the raw amino-acid sequence, 202 residues long: MELWGAYLLLCLFSLLTQVTTEPPTQKPKKIVNAKKDVVNTKMFEELKSRLDTLAQEVALLKEQQALQTVCLKGTKVHMKCFLAFTQTKTFHEASEDCISRGGTLGTPQTGSENDALYEYLRQSVGNEAEIWLGLNDMAAEGTWVDMTGARIAYKNWETEITAQPDGGKTENCAVLSGAANGKWFDKRCRDQLPYICQFGIV.

An N-terminal signal peptide occupies residues 1–21; sequence MELWGAYLLLCLFSLLTQVTT. O-linked (GalNAc...) threonine glycosylation is present at Thr-25. 3 disulfide bridges follow: Cys-71–Cys-81, Cys-98–Cys-197, and Cys-173–Cys-189. The C-type lectin domain occupies 77–198; it reads VHMKCFLAFT…CRDQLPYICQ (122 aa).

In terms of assembly, homotrimer. As to expression, found in plasma.

The protein localises to the secreted. Functionally, tetranectin binds to plasminogen and to isolated kringle 4. May be involved in the packaging of molecules destined for exocytosis. Plays a role in retinal function. This chain is Tetranectin (CLEC3B), found in Homo sapiens (Human).